Here is a 382-residue protein sequence, read N- to C-terminus: ATP phosphoribosyltransferase regulatory subunit (382 aa).

The protein belongs to the class-II aminoacyl-tRNA synthetase family. HisZ subfamily. As to quaternary structure, heteromultimer composed of HisG and HisZ subunits.

It is found in the cytoplasm. It participates in amino-acid biosynthesis; L-histidine biosynthesis; L-histidine from 5-phospho-alpha-D-ribose 1-diphosphate: step 1/9. Its function is as follows. Required for the first step of histidine biosynthesis. May allow the feedback regulation of ATP phosphoribosyltransferase activity by histidine. The sequence is that of ATP phosphoribosyltransferase regulatory subunit from Acidovorax sp. (strain JS42).